A 270-amino-acid chain; its full sequence is 3-phenylpropionate-dihydrodiol/cinnamic acid-dihydrodiol dehydrogenase (270 aa).

10–34 (FITGGGSGLGLALVERFIEEGAQVA) serves as a coordination point for NAD(+). Residue Ser143 coordinates substrate. The active-site Proton acceptor is the Tyr156.

It belongs to the short-chain dehydrogenases/reductases (SDR) family.

It carries out the reaction 3-(cis-5,6-dihydroxycyclohexa-1,3-dien-1-yl)propanoate + NAD(+) = 3-(2,3-dihydroxyphenyl)propanoate + NADH + H(+). The catalysed reaction is (2E)-3-(cis-5,6-dihydroxycyclohexa-1,3-dien-1-yl)prop-2-enoate + NAD(+) = (2E)-3-(2,3-dihydroxyphenyl)prop-2-enoate + NADH + H(+). Its pathway is aromatic compound metabolism; 3-phenylpropanoate degradation. In terms of biological role, converts 3-phenylpropionate-dihydrodiol (PP-dihydrodiol) and cinnamic acid-dihydrodiol (CI-dihydrodiol) into 3-(2,3-dihydroxylphenyl)propanoic acid (DHPP) and 2,3-dihydroxicinnamic acid (DHCI), respectively. This Escherichia coli (strain SMS-3-5 / SECEC) protein is 3-phenylpropionate-dihydrodiol/cinnamic acid-dihydrodiol dehydrogenase.